Consider the following 486-residue polypeptide: N-succinylglutamate 5-semialdehyde dehydrogenase (486 aa).

220 to 225 (GSSRTG) is an NAD(+) binding site. Active-site residues include Glu-243 and Cys-277.

This sequence belongs to the aldehyde dehydrogenase family. AstD subfamily.

The enzyme catalyses N-succinyl-L-glutamate 5-semialdehyde + NAD(+) + H2O = N-succinyl-L-glutamate + NADH + 2 H(+). It participates in amino-acid degradation; L-arginine degradation via AST pathway; L-glutamate and succinate from L-arginine: step 4/5. Functionally, catalyzes the NAD-dependent reduction of succinylglutamate semialdehyde into succinylglutamate. The chain is N-succinylglutamate 5-semialdehyde dehydrogenase from Shewanella putrefaciens (strain CN-32 / ATCC BAA-453).